Consider the following 299-residue polypeptide: Protein-methionine-sulfoxide reductase catalytic subunit MsrP (299 aa).

The segment at residues 1-44 is a signal peptide (tat-type signal); it reads MAHRWINDLTPADITPRGAWMNRRQVMAGMAGAGLAAFAGSAQA. Residues Asn-59, 62–63, Cys-117, Thr-152, Asn-200, Arg-205, and 216–218 each bind Mo-molybdopterin; these read YE and SIK.

This sequence belongs to the MsrP family. Heterodimer of a catalytic subunit (MsrP) and a heme-binding subunit (MsrQ). Mo-molybdopterin is required as a cofactor. Predicted to be exported by the Tat system. The position of the signal peptide cleavage has not been experimentally proven.

It is found in the periplasm. The catalysed reaction is L-methionyl-[protein] + a quinone + H2O = L-methionyl-(S)-S-oxide-[protein] + a quinol. It catalyses the reaction L-methionyl-[protein] + a quinone + H2O = L-methionyl-(R)-S-oxide-[protein] + a quinol. Part of the MsrPQ system that repairs oxidized periplasmic proteins containing methionine sulfoxide residues (Met-O), using respiratory chain electrons. Thus protects these proteins from oxidative-stress damage caused by reactive species of oxygen and chlorine generated by the host defense mechanisms. MsrPQ is essential for the maintenance of envelope integrity under bleach stress, rescuing a wide series of structurally unrelated periplasmic proteins from methionine oxidation. The catalytic subunit MsrP is non-stereospecific, being able to reduce both (R-) and (S-) diastereoisomers of methionine sulfoxide. The chain is Protein-methionine-sulfoxide reductase catalytic subunit MsrP from Ruegeria pomeroyi (strain ATCC 700808 / DSM 15171 / DSS-3) (Silicibacter pomeroyi).